The sequence spans 369 residues: Isopentenyl-diphosphate delta-isomerase (369 aa).

9 to 10 provides a ligand contact to substrate; sequence RK. FMN-binding positions include Thr65, 66–68, Ser96, and Asn125; that span reads GMT. 96–98 is a substrate binding site; sequence SQR. Residue Gln160 participates in substrate binding. Glu161 lines the Mg(2+) pocket. Residues Lys193, Ser218, Thr223, 275–277, and 296–297 contribute to the FMN site; these read GVR and AL.

This sequence belongs to the IPP isomerase type 2 family. In terms of assembly, homooctamer. Dimer of tetramers. It depends on FMN as a cofactor. The cofactor is NADPH. Mg(2+) is required as a cofactor.

The protein resides in the cytoplasm. The catalysed reaction is isopentenyl diphosphate = dimethylallyl diphosphate. Its function is as follows. Involved in the biosynthesis of isoprenoids. Catalyzes the 1,3-allylic rearrangement of the homoallylic substrate isopentenyl (IPP) to its allylic isomer, dimethylallyl diphosphate (DMAPP). This Sulfurisphaera tokodaii (strain DSM 16993 / JCM 10545 / NBRC 100140 / 7) (Sulfolobus tokodaii) protein is Isopentenyl-diphosphate delta-isomerase.